The primary structure comprises 780 residues: Striatin (780 aa).

A coiled-coil region spans residues 53–120 (LHFLQHEWAR…QERAKYHKLK (68 aa)). Positions 55-63 (FLQHEWARF) are caveolin-binding. The tract at residues 124–145 (ELNQGDMKPPSYDSDEGNETEV) is disordered. Ser137 is modified (phosphoserine). Positions 149–166 (QNSQFMWKQGRQLLRQYL) are calmodulin-binding. A Phosphothreonine modification is found at Thr225. Phosphoserine occurs at positions 227, 229, 245, and 259. 3 disordered regions span residues 290–321 (FLVASEEGDNESRSAGDGTDWEKEDQCLTPER), 334–353 (EQYKKERKGKKGVKRPNRSK), and 363–388 (DVDELPSLQPSVGSPSRPSSSRLPEQ). Basic and acidic residues predominate over residues 299–315 (NESRSAGDGTDWEKEDQ). A compositionally biased stretch (basic residues) spans 338–351 (KERKGKKGVKRPNR). WD repeat units lie at residues 461–500 (SHFDGIRALAFHPIEPVLITASEDHTLKMWNLQKTAPAKK), 514–553 (AHKGPVLCVVMSSNGEQCYSGGTDGLIQSWSTTNPNVDPY), 567–606 (GHTDAVWGLAYSAAHQRLLSCSADGTLRLWTTTEVAPALT), 662–701 (SSSCQINRVISHPTLPISITAHEDRHIKFYDNNTGKLIHS), 704–743 (AHLEAVTSLAVDPNGLYLMSGSHDCSIRLWNLESKTCIQE), and 750–780 (KFEESIHDVAFHPSKCYIASAGADALAKVFV).

Belongs to the WD repeat striatin family. In terms of assembly, part of the core of STRIPAK complexes composed of PP2A catalytic and scaffolding subunits, the striatins (PP2A regulatory subunits), the striatin-associated proteins MOB4, STRIP1 and STRIP2, PDCD10 and members of the STE20 kinases, such as STK24 and STK26. Interacts with CTTNBP2; this interaction may regulate dendritic spine distribution of STRN. Activation of glutamate receptors weakens the interaction with CTTNBP2. As to expression, mainly expressed in the central nervous system. Mostly confined in dendrites, not in axons, and is most abundant in dendritic spines.

The protein resides in the cytoplasm. Its subcellular location is the membrane. It localises to the cell projection. The protein localises to the dendritic spine. Calmodulin-binding scaffolding protein which is the center of the striatin-interacting phosphatase and kinase (STRIPAK) complexes. STRIPAK complexes have critical roles in protein (de)phosphorylation and are regulators of multiple signaling pathways including Hippo, MAPK, nuclear receptor and cytoskeleton remodeling. Different types of STRIPAK complexes are involved in a variety of biological processes such as cell growth, differentiation, apoptosis, metabolism and immune regulation. In Rattus norvegicus (Rat), this protein is Striatin (Strn).